The primary structure comprises 113 residues: Probable UPF0122 protein (113 aa).

It belongs to the UPF0122 family.

Functionally, might take part in the signal recognition particle (SRP) pathway. This is inferred from the conservation of its genetic proximity to ftsY/ffh. May be a regulatory protein. The chain is Probable UPF0122 protein from Mycoplasma mycoides.